We begin with the raw amino-acid sequence, 473 residues long: MKTLYSLRRFYPVETLFNGTLALAGRDQETTGFAWWAGNARLINLSGKLLGAHVAHAGLIVFWAGAMNLFEVAHFVPEKPMYEQGLILLPHLATLGWGVGPGGEVVDTFPYFVSGVLHLISSAVLGFGGIYHALIGPETLEESLPFFGYVWKDRSKMTTILGIHLILLGVGAFLLVLKALYFGGVYDTWAPGGGDVRKITNLTLSPSVIFGYLLESPFGGEGWIVSVDNLEDIIGGHVWLGSICIFGGIWHILTKPFAWARRAFVWSGEAYLSYSLGALSVFGFIACCFVWFNNTAYPSEFYGPTGPEASQAQAFTFLVRDQRLGANVGSAQGPTGLGKYLMRSPTGEIIFGGETMRFWDLRAPWLEPLRGPNGLDLSRLKKDIQPWQERRSAEYMTHAPLGSLNSVGGVATEINAVNYVSPRSWLATSHFVLGFFFFVGHLWHAGRARAAAAGFEKGIDRDFEPVLSMNPLN.

The propeptide occupies 1 to 14 (MKTLYSLRRFYPVE). Thr15 carries the N-acetylthreonine modification. Thr15 carries the post-translational modification Phosphothreonine. A run of 5 helical transmembrane segments spans residues 69–93 (LFEV…PHLA), 134–155 (LIGP…KDRS), 178–200 (KALY…RKIT), 255–275 (KPFA…LSYS), and 291–312 (WFNN…ASQA). Glu367 contributes to the [CaMn4O5] cluster binding site. The chain crosses the membrane as a helical span at residues 447–471 (RARAAAAGFEKGIDRDFEPVLSMNP).

Belongs to the PsbB/PsbC family. PsbC subfamily. PSII is composed of 1 copy each of membrane proteins PsbA, PsbB, PsbC, PsbD, PsbE, PsbF, PsbH, PsbI, PsbJ, PsbK, PsbL, PsbM, PsbT, PsbX, PsbY, PsbZ, Psb30/Ycf12, at least 3 peripheral proteins of the oxygen-evolving complex and a large number of cofactors. It forms dimeric complexes. Binds multiple chlorophylls and provides some of the ligands for the Ca-4Mn-5O cluster of the oxygen-evolving complex. It may also provide a ligand for a Cl- that is required for oxygen evolution. PSII binds additional chlorophylls, carotenoids and specific lipids. is required as a cofactor.

The protein resides in the plastid. It is found in the chloroplast thylakoid membrane. Functionally, one of the components of the core complex of photosystem II (PSII). It binds chlorophyll and helps catalyze the primary light-induced photochemical processes of PSII. PSII is a light-driven water:plastoquinone oxidoreductase, using light energy to abstract electrons from H(2)O, generating O(2) and a proton gradient subsequently used for ATP formation. The protein is Photosystem II CP43 reaction center protein of Cycas taitungensis (Prince sago).